We begin with the raw amino-acid sequence, 95 residues long: Aspartyl/glutamyl-tRNA(Asn/Gln) amidotransferase subunit C (95 aa).

This sequence belongs to the GatC family. In terms of assembly, heterotrimer of A, B and C subunits.

It catalyses the reaction L-glutamyl-tRNA(Gln) + L-glutamine + ATP + H2O = L-glutaminyl-tRNA(Gln) + L-glutamate + ADP + phosphate + H(+). The enzyme catalyses L-aspartyl-tRNA(Asn) + L-glutamine + ATP + H2O = L-asparaginyl-tRNA(Asn) + L-glutamate + ADP + phosphate + 2 H(+). Its function is as follows. Allows the formation of correctly charged Asn-tRNA(Asn) or Gln-tRNA(Gln) through the transamidation of misacylated Asp-tRNA(Asn) or Glu-tRNA(Gln) in organisms which lack either or both of asparaginyl-tRNA or glutaminyl-tRNA synthetases. The reaction takes place in the presence of glutamine and ATP through an activated phospho-Asp-tRNA(Asn) or phospho-Glu-tRNA(Gln). This chain is Aspartyl/glutamyl-tRNA(Asn/Gln) amidotransferase subunit C, found in Syntrophus aciditrophicus (strain SB).